A 336-amino-acid polypeptide reads, in one-letter code: NmrA-like family domain-containing oxidoreductase malD (336 aa).

Residues 12–17, 40–44, 61–62, 82–84, lysine 140, and 163–166 each bind NADP(+); these read GGTGNQ, RDPTS, DG, TNS, and FMEA.

It belongs to the NmrA-type oxidoreductase family.

Functionally, nmrA-like family domain-containing oxidoreductase; part of the gene cluster that mediates the biosynthesis of malbrancheamide, a dichlorinated fungal indole alkaloid that belongs to a family of natural products containing a characteristic bicyclo[2.2.2]diazaoctane core. The first step of malbrancheamide biosynthesis involves coupling of L-proline and L-tryptophan by malG, a bimodular NRPS, to produce L-Pro-L-Trp aldehyde through reductive offloading. This compound undergoes spontaneous cyclization and dehydration to give a dienamine which is reverse prenylated at C-2 by malE. The other prenyltransferase present in the cluster, malB, displays modest activity, suggesting that may be a redundant gene in the pathway. Subsequently, a [4+2] Diels-Alder cyclo-addition catalyzed by the bifunctional enzyme malC forms the characteristic bicyclo[2.2.2]diazaoctane ring of premalbrancheamid. Finally, the flavin-dependent halogenase malA catalyzes the iterative dichlorination of the indole ring of premalbrancheamide to yield C-9 monochlorinated malbrancheamide B, C-8 monochlorinated isomalbrancheamide B, and dichlorinated malbrancheamide. MalA is also able to brominate premalbrancheamide at C-9 to yield malbrancheamide C, and, to a lesser extend, at C-8 to yield isomalbrancheamide C. Finally, malA can brominate C-9 monochlorinated malbrancheamide B at C-8 to yield malbrancheamide D, or C-8 monochlorinated isomalbrancheamide B at C-9 to produce isomalbrancheamide D. This is NmrA-like family domain-containing oxidoreductase malD from Malbranchea aurantiaca.